We begin with the raw amino-acid sequence, 344 residues long: Probable pectinesterase 67 (344 aa).

The N-terminal stretch at 1-23 (MGHRTRMILVLTLVVMSIWGSDA) is a signal peptide. N-linked (GlcNAc...) asparagine glycans are attached at residues Asn-43 and Asn-151. Substrate is bound at residue Gln-152. Asp-196 (nucleophile) is an active-site residue. Arg-256 is a binding site for substrate. Asn-282 carries N-linked (GlcNAc...) asparagine glycosylation.

Belongs to the pectinesterase family. In terms of tissue distribution, expressed in flower buds.

It is found in the secreted. Its subcellular location is the cell wall. The catalysed reaction is [(1-&gt;4)-alpha-D-galacturonosyl methyl ester](n) + n H2O = [(1-&gt;4)-alpha-D-galacturonosyl](n) + n methanol + n H(+). It participates in glycan metabolism; pectin degradation; 2-dehydro-3-deoxy-D-gluconate from pectin: step 1/5. Functionally, acts in the modification of cell walls via demethylesterification of cell wall pectin. The polypeptide is Probable pectinesterase 67 (PME67) (Arabidopsis thaliana (Mouse-ear cress)).